The chain runs to 523 residues: Cilia- and flagella-associated protein 157 (523 aa).

The segment at 1–31 (MAPKKKPNKGGKEMQGKKIGGKKDASGTKTP) is disordered. Basic and acidic residues predominate over residues 10 to 26 (GGKEMQGKKIGGKKDAS). Position 30 is a phosphothreonine (threonine 30). 3 coiled-coil regions span residues 32–191 (ELAM…LEKK), 248–274 (VQLL…LENT), and 302–371 (GTEE…VLIQ). The tract at residues 419 to 440 (QPDMGSHQDKQPQGLSKESQRI) is disordered. A compositionally biased stretch (polar residues) spans 429–440 (QPQGLSKESQRI).

The protein belongs to the CFAP157 family. In terms of assembly, interacts with TUBB and TUBA4A. Interacts with CEP350. In terms of tissue distribution, specifically expressed in tissues containing motile cilia.

The protein localises to the cytoplasm. It is found in the cytoskeleton. The protein resides in the cilium basal body. Its function is as follows. Specifically required during spermatogenesis for flagellum morphogenesis and sperm motility. May be required to suppress the formation of supernumerary axonemes and ensure a correct ultrastructure. The chain is Cilia- and flagella-associated protein 157 from Mus musculus (Mouse).